A 176-amino-acid polypeptide reads, in one-letter code: NAD(P)H-quinone oxidoreductase subunit J (176 aa).

Polar residues-rich tracts occupy residues 1-12 and 20-30; these read MEKDSQATSSDT and ISQSLSKDGIP. The interval 1–30 is disordered; the sequence is MEKDSQATSSDTSIEKEGVISQSLSKDGIP.

It belongs to the complex I 30 kDa subunit family. In terms of assembly, NDH-1 can be composed of about 15 different subunits; different subcomplexes with different compositions have been identified which probably have different functions.

The protein resides in the cellular thylakoid membrane. The enzyme catalyses a plastoquinone + NADH + (n+1) H(+)(in) = a plastoquinol + NAD(+) + n H(+)(out). The catalysed reaction is a plastoquinone + NADPH + (n+1) H(+)(in) = a plastoquinol + NADP(+) + n H(+)(out). In terms of biological role, NDH-1 shuttles electrons from an unknown electron donor, via FMN and iron-sulfur (Fe-S) centers, to quinones in the respiratory and/or the photosynthetic chain. The immediate electron acceptor for the enzyme in this species is believed to be plastoquinone. Couples the redox reaction to proton translocation, and thus conserves the redox energy in a proton gradient. Cyanobacterial NDH-1 also plays a role in inorganic carbon-concentration. This is NAD(P)H-quinone oxidoreductase subunit J from Prochlorococcus marinus (strain AS9601).